Here is a 177-residue protein sequence, read N- to C-terminus: NAD(P)H-quinone oxidoreductase subunit 6, chloroplastic (177 aa).

5 helical membrane-spanning segments follow: residues 10 to 30 (FLLV…VLLT), 32 to 52 (PIFS…FYTP), 61 to 81 (AQLL…VMFM), 92 to 112 (LWTV…VSLI), and 152 to 172 (FFLP…GAIS).

Belongs to the complex I subunit 6 family. As to quaternary structure, NDH is composed of at least 16 different subunits, 5 of which are encoded in the nucleus.

The protein resides in the plastid. Its subcellular location is the chloroplast thylakoid membrane. It catalyses the reaction a plastoquinone + NADH + (n+1) H(+)(in) = a plastoquinol + NAD(+) + n H(+)(out). The enzyme catalyses a plastoquinone + NADPH + (n+1) H(+)(in) = a plastoquinol + NADP(+) + n H(+)(out). Functionally, NDH shuttles electrons from NAD(P)H:plastoquinone, via FMN and iron-sulfur (Fe-S) centers, to quinones in the photosynthetic chain and possibly in a chloroplast respiratory chain. The immediate electron acceptor for the enzyme in this species is believed to be plastoquinone. Couples the redox reaction to proton translocation, and thus conserves the redox energy in a proton gradient. This chain is NAD(P)H-quinone oxidoreductase subunit 6, chloroplastic (ndhG), found in Ranunculus macranthus (Large buttercup).